The following is a 165-amino-acid chain: NADPH-dependent 7-cyano-7-deazaguanine reductase (165 aa).

The active-site Thioimide intermediate is the C56. The Proton donor role is filled by D63. Substrate-binding positions include 78–80 (VES) and 97–98 (HE).

Belongs to the GTP cyclohydrolase I family. QueF type 1 subfamily.

Its subcellular location is the cytoplasm. It carries out the reaction 7-aminomethyl-7-carbaguanine + 2 NADP(+) = 7-cyano-7-deazaguanine + 2 NADPH + 3 H(+). It participates in tRNA modification; tRNA-queuosine biosynthesis. With respect to regulation, is totally inhibited by 4-aminobenzylcyanide in vitro. Functionally, catalyzes the NADPH-dependent reduction of 7-cyano-7-deazaguanine (preQ0) to 7-aminomethyl-7-deazaguanine (preQ1), a late step in the queuosine pathway. Is highly specific for its natural substrate preQ0, since it cannot use various aliphatic, aromatic and heterocyclic nitriles, although it can reduce the substrate analog 5-cyanopyrrolo[2,3-d]pyrimidin-4-one with lesser efficiency. This is NADPH-dependent 7-cyano-7-deazaguanine reductase from Geobacillus kaustophilus (strain HTA426).